We begin with the raw amino-acid sequence, 506 residues long: Maturase K (506 aa).

It belongs to the intron maturase 2 family. MatK subfamily.

It localises to the plastid. The protein resides in the chloroplast. Usually encoded in the trnK tRNA gene intron. Probably assists in splicing its own and other chloroplast group II introns. In Cytisus scoparius (Scotch broom), this protein is Maturase K.